We begin with the raw amino-acid sequence, 38 residues long: Photosystem II reaction center protein L (38 aa).

Residues 17–37 traverse the membrane as a helical segment; sequence SLYWGLLLIFVLAVLFSNYFF.

It belongs to the PsbL family. In terms of assembly, PSII is composed of 1 copy each of membrane proteins PsbA, PsbB, PsbC, PsbD, PsbE, PsbF, PsbH, PsbI, PsbJ, PsbK, PsbL, PsbM, PsbT, PsbX, PsbY, PsbZ, Psb30/Ycf12, at least 3 peripheral proteins of the oxygen-evolving complex and a large number of cofactors. It forms dimeric complexes.

The protein localises to the plastid. The protein resides in the chloroplast thylakoid membrane. Functionally, one of the components of the core complex of photosystem II (PSII). PSII is a light-driven water:plastoquinone oxidoreductase that uses light energy to abstract electrons from H(2)O, generating O(2) and a proton gradient subsequently used for ATP formation. It consists of a core antenna complex that captures photons, and an electron transfer chain that converts photonic excitation into a charge separation. This subunit is found at the monomer-monomer interface and is required for correct PSII assembly and/or dimerization. In Oenothera argillicola (Appalachian evening primrose), this protein is Photosystem II reaction center protein L.